Consider the following 250-residue polypeptide: Small ribosomal subunit protein uS3 (250 aa).

Residues 39–111 enclose the KH type-2 domain; that stretch reads IRPLIKNHYP…KVQINIFEVK (73 aa).

The protein belongs to the universal ribosomal protein uS3 family. As to quaternary structure, part of the 30S ribosomal subunit. Forms a tight complex with proteins S10 and S14.

Functionally, binds the lower part of the 30S subunit head. Binds mRNA in the 70S ribosome, positioning it for translation. The protein is Small ribosomal subunit protein uS3 of Ziziphus jujuba witches'-broom phytoplasma.